A 96-amino-acid chain; its full sequence is MFIELVHIGFGNILAMNRVIAISPPSSAPIKRIIQESRTKGFLIDMTNGRKTKAVIFTDSGHIVLAALAPETITGRLSISRGGAVKPELVDDKLEL.

The protein belongs to the RemA family.

This Dehalococcoides mccartyi (strain ATCC BAA-2266 / KCTC 15142 / 195) (Dehalococcoides ethenogenes (strain 195)) protein is Putative regulatory protein DET0036.